A 104-amino-acid chain; its full sequence is Class I hydrophobin 12 (104 aa).

A signal peptide spans 1-25 (MFSKATLFFTAAVVIVAAGATPTTS). 4 disulfides stabilise this stretch: cysteine 27–cysteine 85, cysteine 34–cysteine 79, cysteine 35–cysteine 67, and cysteine 86–cysteine 99.

The protein belongs to the fungal hydrophobin family. Self-assembles to form functional amyloid fibrils called rodlets. Self-assembly into fibrillar rodlets occurs spontaneously at hydrophobic:hydrophilic interfaces and the rodlets further associate laterally to form amphipathic monolayers.

It localises to the secreted. Its subcellular location is the cell wall. Aerial growth, conidiation, and dispersal of filamentous fungi in the environment rely upon a capability of their secreting small amphipathic proteins called hydrophobins (HPBs) with low sequence identity. Class I can self-assemble into an outermost layer of rodlet bundles on aerial cell surfaces, conferring cellular hydrophobicity that supports fungal growth, development and dispersal; whereas Class II form highly ordered films at water-air interfaces through intermolecular interactions but contribute nothing to the rodlet structure. Hydph12 is a class I hydrophobin involved in the formation of mycelium knots. The protein is Class I hydrophobin 12 of Pleurotus ostreatus (strain PC15) (Oyster mushroom).